We begin with the raw amino-acid sequence, 476 residues long: Homeobox protein invected (476 aa).

Disordered regions lie at residues 1 to 43 (MAAV…SEDI), 273 to 331 (KTRY…TSGD), and 347 to 381 (DRPSSGRSPRTRRPKKPPGDTASNDEKRPRTAFSG). The span at 23–32 (SPNTRDTTSP) shows a compositional bias: polar residues. 2 stretches are compositionally biased toward basic and acidic residues: residues 33-43 (ECHDDEKSEDI) and 292-305 (KLDEARVPDIKTPD). The span at 318–331 (GSNSGSTSGATSGD) shows a compositional bias: low complexity. Residues 372–431 (EKRPRTAFSGPQLARLKHEFAENRYLTERRRQSLAAELGLAEAQIKIWFQNKRAKIKKAS) constitute a DNA-binding region (homeobox).

The protein belongs to the engrailed homeobox family. Expressed in the middle silk gland but not in the posterior silk gland during the fourth molt/fifth intermolt period.

It is found in the nucleus. In terms of biological role, this protein might be involved in the compartmentalization of the silk gland. This is Homeobox protein invected (INV) from Bombyx mori (Silk moth).